Reading from the N-terminus, the 227-residue chain is Germin-like protein subfamily T member 3 (227 aa).

Residues 1–26 (MAHISQISSFLSIVLIFLALCITLFT) form the signal peptide. Cysteines 44 and 59 form a disulfide. Residues 71–219 (SGLNTPLNTS…AFKADSKTIN (149 aa)) enclose the Cupin type-1 domain. The N-linked (GlcNAc...) asparagine glycan is linked to asparagine 78. 3 residues coordinate Mn(2+): histidine 119, histidine 121, and glutamate 126. Asparagine 143 carries an N-linked (GlcNAc...) asparagine glycan. Residue histidine 165 participates in Mn(2+) binding.

This sequence belongs to the germin family. As to quaternary structure, oligomer (believed to be a pentamer but probably hexamer).

The protein localises to the secreted. It localises to the extracellular space. It is found in the apoplast. In terms of biological role, may play a role in plant defense. Probably has no oxalate oxidase activity even if the active site is conserved. This is Germin-like protein subfamily T member 3 from Arabidopsis thaliana (Mouse-ear cress).